A 290-amino-acid chain; its full sequence is Glycine--tRNA ligase alpha subunit (290 aa).

It belongs to the class-II aminoacyl-tRNA synthetase family. Tetramer of two alpha and two beta subunits.

The protein localises to the cytoplasm. The enzyme catalyses tRNA(Gly) + glycine + ATP = glycyl-tRNA(Gly) + AMP + diphosphate. This Syntrophobacter fumaroxidans (strain DSM 10017 / MPOB) protein is Glycine--tRNA ligase alpha subunit.